A 151-amino-acid chain; its full sequence is MKNKLLFMMLTILGAPGIATATNYDLARSEYNFAVNELSKSSFNQAAIIGQVGTDNSARVRQEGSKLLSVISQEGGNNRAKVDQAGNYNFAYIEQTGNANDASISQSAYGNSAAIIQKGSGNKANITQYGTQKTAVVVQKQSHMAIRVTQR.

The N-terminal stretch at 1 to 21 (MKNKLLFMMLTILGAPGIATA) is a signal peptide.

It belongs to the CsgA/CsgB family.

It is found in the fimbrium. Curlin is the structural subunit of the curli. Curli are coiled surface structures that assemble preferentially at growth temperatures below 37 degrees Celsius. Curli can bind to fibronectin. The minor subunit is the nucleation component of curlin monomers. This is Minor curlin subunit (csgB) from Salmonella enteritidis.